A 147-amino-acid polypeptide reads, in one-letter code: Protein PBDC1 homolog (147 aa).

The protein belongs to the PBDC1 family.

It localises to the cytoplasm. The protein resides in the nucleus. The sequence is that of Protein PBDC1 homolog from Schizosaccharomyces pombe (strain 972 / ATCC 24843) (Fission yeast).